The primary structure comprises 1403 residues: MKDIFNFFEKPKDPLSFNAIRIALASPDKIRQWSHGEVKKPETINYRTFKPERDGLFCARIFGPVKDYECNCGKYKRMKHRGVVCEKCGVEVIQSKVRRERLGHITLATPVAHIWFLKSLPSRIGNLLDITLKELEKVLYCESYIVLDPKATPLQKGELISEDKMHRLYQEHGEDSFTTGMGGEAVREMLKSLDVEKLSEELRKDMRETTSEAKRKKYAKRLKVAEAFRVSGNKPEWMMLDVIPVIPPDLRPLVPLDGGRFATSDLNDLYRRVINRNNRLKRLQELNAPDIIIRNEKRMLQEAVDALFDNGRRGKTITGPNKRPLKSLSDMLKGKQGRFRQNLLGKRVDYSGRSVIVVGPELRLHQCGLPKIMALELFKPFIYNKLEEKGYVTTIKSAKKMVEKERPEVWDILEDVIREHPVLLNRAPTLHRLGMQAFEPVLIEGKAIQLHPLVCAAFNADFDGDQMAVHVPLSIEAQMEARVLMMSTNNILSPANGKPIIVPTQDMVLGIYYMTRAREFAGGEGRVFASPDEVRAAYDHGEVHLQAKVVCRIDGKRKETTVGRVLLWEVVPRAVGFDAINKVLDKKSLGGLIDLCYRLTGEKETVLLADRVRSLGYYNATRAGISIALKDMIIPAKKQEFLDFARKEVSEIENQYLEGLITDGERYNKVIDIWAEITEKVAQEMMQQISQEETTGDRDGKRETRKQPSFNPIYIMADSGARGSAQQIRQLAGMRGLMAKPSGEIIETPITANFREGLSVLQYFISTHGARKGLADTALKTANSGYLTRRLVDVAQDAIINEYDCGTMDGLFIGALVEGGEIIEPLGERILGRVALDDILDPVTGEVLVRANEEIDEDRVRRIENSGMDKVKIRSVLTCQAKRGICVECYGRDLARGRKVSVGEAVGVIAAQSIGEPGTQLTMRTFHIGGAATRRAEQSSLENRYAGSVKFAGLVTVQKTDGTLVAMNRNGEIVVVDDSGRERERYQVIYGARILVKEGQRIEPGVLMAEWDPFAIPLLTEVGGVVRYEDIIEGVTMSEALDEVTGLSRKTVIESKDPEARPRVTIRDANGNMMDLPSSRNPASYFLPQGSIITVNDGDEIHPGEVIAKVPRETTKTKDITGGLPRVAELFEARKPKDAAAIAEIDGVVSFGKDTKGKRKLIITPEVNGEQRTDLAKEYLISKGKNISVHSGDRVKAGEAMMDGSANPHDILKVLGEKELARYLVDEVQEVYRLQGVKINDKHIETIVRQMLRRVRVTDVGDTNFLVDEQVEKWVFEEENEKVMSEGKRPAVGEPLLLGITKASLSTESFISASSFQETTKVLTEAAINGKVDYLRGLKENVIMGRLIPAGTGLPNYKHLDIAVESPTDEVNEMEAALAATHGDTGPLGEPSRPVGTQTTGAA.

4 residues coordinate Zn(2+): cysteine 70, cysteine 72, cysteine 85, and cysteine 88. Mg(2+)-binding residues include aspartate 461, aspartate 463, and aspartate 465. The disordered stretch occupies residues 687–708 (QQISQEETTGDRDGKRETRKQP). The segment covering 695–706 (TGDRDGKRETRK) has biased composition (basic and acidic residues). The Zn(2+) site is built by cysteine 805, cysteine 879, cysteine 886, and cysteine 889. The segment at 1381–1403 (THGDTGPLGEPSRPVGTQTTGAA) is disordered.

It belongs to the RNA polymerase beta' chain family. In terms of assembly, the RNAP catalytic core consists of 2 alpha, 1 beta, 1 beta' and 1 omega subunit. When a sigma factor is associated with the core the holoenzyme is formed, which can initiate transcription. Requires Mg(2+) as cofactor. Zn(2+) is required as a cofactor.

It carries out the reaction RNA(n) + a ribonucleoside 5'-triphosphate = RNA(n+1) + diphosphate. Its function is as follows. DNA-dependent RNA polymerase catalyzes the transcription of DNA into RNA using the four ribonucleoside triphosphates as substrates. This is DNA-directed RNA polymerase subunit beta' from Myxococcus xanthus (strain DK1622).